The following is a 227-amino-acid chain: UPF0173 metal-dependent hydrolase BCQ_4418 (227 aa).

It belongs to the UPF0173 family.

This Bacillus cereus (strain Q1) protein is UPF0173 metal-dependent hydrolase BCQ_4418.